A 391-amino-acid chain; its full sequence is Histamine H4 receptor (391 aa).

Residues 1 to 19 (MSESNGTDVLPLTAQVPLA) are Extracellular-facing. A glycan (N-linked (GlcNAc...) asparagine) is linked at Asn-5. A helical membrane pass occupies residues 20 to 40 (FLMSLLAFAITIGNAVVILAF). The Cytoplasmic segment spans residues 41–52 (VADRNLRHRSNY). Residues 53–73 (FFLNLAISDFFVGVISIPLYI) form a helical membrane-spanning segment. Residues 74 to 87 (PHTLFNWNFGSGIC) are Extracellular-facing. Cys-87 and Cys-166 are oxidised to a cystine. Residues 88 to 108 (MFWLITDYLLCTASVYSIVLI) form a helical membrane-spanning segment. Residues 109–131 (SYDRYQSVSNAVRYRAQHTGILK) lie on the Cytoplasmic side of the membrane. Residues 132-152 (IVAQMVAVWILAFLVNGPMIL) traverse the membrane as a helical segment. Topologically, residues 153-174 (ASDSWKNSTNTEECEPGFVTEW) are extracellular. Residue Asn-159 is glycosylated (N-linked (GlcNAc...) asparagine). The helical transmembrane segment at 175–195 (YILAITAFLEFLLPVSLVVYF) threads the bilayer. Over 196–306 (SVQIYWSLWK…LLRGRKLARS (111 aa)) the chain is Cytoplasmic. The chain crosses the membrane as a helical span at residues 307–327 (LAVLLSAFAICWAPYCLFTIV). Topologically, residues 328 to 343 (LSTYRRGERPKSIWYS) are extracellular. The chain crosses the membrane as a helical span at residues 344–364 (IAFWLQWFNSLINPFLYPLCH). At 365 to 391 (RRFQKAFWKILCVTKQPAPSQTQSVSS) the chain is on the cytoplasmic side.

This sequence belongs to the G-protein coupled receptor 1 family. As to quaternary structure, interacts with TSPAN4.

The protein localises to the cell membrane. Its function is as follows. The H4 subclass of histamine receptors could mediate the histamine signals in peripheral tissues. Displays a significant level of constitutive activity (spontaneous activity in the absence of agonist). This is Histamine H4 receptor (Hrh4) from Rattus norvegicus (Rat).